The chain runs to 986 residues: Vacuolar membrane protease (986 aa).

The Cytoplasmic segment spans residues 1-20 (MATPRAQKFNPIAFTPGPVT). The chain crosses the membrane as a helical span at residues 21–41 (LITTIVYLALLIPILVISLVV). The Vacuolar portion of the chain corresponds to 42-392 (PPAPETSPEG…AFAVFRLHTL (351 aa)). N-linked (GlcNAc...) asparagine glycans are attached at residues Asn-53, Asn-116, and Asn-119. Residues His-175 and Asp-187 each coordinate Zn(2+). Glu-221 serves as the catalytic Proton acceptor. Residue Glu-222 participates in Zn(2+) binding. An N-linked (GlcNAc...) asparagine glycan is attached at Asn-238. 2 residues coordinate Zn(2+): Glu-247 and His-320. Residues 393 to 413 (FALSVTLLIVAPLVIFITAIV) form a helical membrane-spanning segment. The Cytoplasmic portion of the chain corresponds to 414-447 (LSKTDRMYLFSMSKSLGGTDERVSLRGLRGLFRT). Residues 448 to 468 (PIILAVATVIPIGLAYLLEKV) traverse the membrane as a helical segment. Over 469 to 477 (NPYIVHSSQ) the chain is Vacuolar. A helical membrane pass occupies residues 478–498 (FSVWSMMISVWIFLAWFLACA). At 499–509 (ADFFRPSALHR) the chain is on the cytoplasmic side. A helical membrane pass occupies residues 510 to 530 (AYSYTWIFIATWVMLVINTVY). The Vacuolar portion of the chain corresponds to 531–534 (ANQK). A helical membrane pass occupies residues 535–555 (GIAAGYFVFFYFSGSFLATWV). The Cytoplasmic segment spans residues 556 to 665 (SYLELFALPR…WSWTLPRWTW (110 aa)). Positions 595-620 (ELPSDTGPHAEYPGDADETDPTESTS) are disordered. The helical transmembrane segment at 666 to 686 (VLQLLLLAPIVLILVGQLALF) threads the bilayer. Topologically, residues 687 to 702 (LTTSMSQVGSDGVSTF) are vacuolar. The helical transmembrane segment at 703 to 723 (IVYLACAVFTTLLFAPLFPFI) threads the bilayer. The Cytoplasmic portion of the chain corresponds to 724–729 (HRFTYH). Residues 730–750 (IPTFLFLVFVGTLIYNLVAFP) form a helical membrane-spanning segment. Residues 751-986 (FSPANRLKMF…VEASHGITIQ (236 aa)) lie on the Vacuolar side of the membrane. Asn-797, Asn-840, and Asn-948 each carry an N-linked (GlcNAc...) asparagine glycan.

This sequence belongs to the peptidase M28 family. Zn(2+) is required as a cofactor.

The protein resides in the vacuole membrane. Its function is as follows. May be involved in vacuolar sorting and osmoregulation. The chain is Vacuolar membrane protease from Blastomyces gilchristii (strain SLH14081) (Blastomyces dermatitidis).